The following is a 193-amino-acid chain: ATP synthase subunit b 1 (193 aa).

The interval 13–32 (PAVTGGDTHSGTGVPAEAHG) is disordered. The chain crosses the membrane as a helical span at residues 40–60 (ATFPSQLLWLAITFGLFYLFL).

It belongs to the ATPase B chain family. F-type ATPases have 2 components, F(1) - the catalytic core - and F(0) - the membrane proton channel. F(1) has five subunits: alpha(3), beta(3), gamma(1), delta(1), epsilon(1). F(0) has three main subunits: a(1), b(2) and c(10-14). The alpha and beta chains form an alternating ring which encloses part of the gamma chain. F(1) is attached to F(0) by a central stalk formed by the gamma and epsilon chains, while a peripheral stalk is formed by the delta and b chains.

It is found in the cell inner membrane. Functionally, f(1)F(0) ATP synthase produces ATP from ADP in the presence of a proton or sodium gradient. F-type ATPases consist of two structural domains, F(1) containing the extramembraneous catalytic core and F(0) containing the membrane proton channel, linked together by a central stalk and a peripheral stalk. During catalysis, ATP synthesis in the catalytic domain of F(1) is coupled via a rotary mechanism of the central stalk subunits to proton translocation. In terms of biological role, component of the F(0) channel, it forms part of the peripheral stalk, linking F(1) to F(0). The sequence is that of ATP synthase subunit b 1 from Mesorhizobium japonicum (strain LMG 29417 / CECT 9101 / MAFF 303099) (Mesorhizobium loti (strain MAFF 303099)).